Here is a 639-residue protein sequence, read N- to C-terminus: Signal recognition particle receptor subunit alpha (639 aa).

The disordered stretch occupies residues 132 to 317 (APTTMKKFED…STKPSATKGT (186 aa)). 2 stretches are compositionally biased toward basic and acidic residues: residues 137–146 (KKFEDSEKAK) and 153–165 (IETRGEKPKEKAK). Ser-178 is modified (phosphoserine). Residues 204-240 (ELSKEEQIRRKREEFIQKHGRGMEKSSKSSKSDAPKE) are compositionally biased toward basic and acidic residues. At Thr-285 the chain carries Phosphothreonine. Phosphoserine is present on residues Ser-297, Ser-298, and Ser-299. The span at 305 to 315 (AQNSTKPSATK) shows a compositional bias: polar residues. Residues 420 to 637 (YVVTFCGVNG…NAKAVVAALM (218 aa)) are NG domain. 426-433 (GVNGVGKS) contacts GTP. Ser-474 carries the post-translational modification Phosphoserine. GTP is bound at residue 521 to 525 (DTAGR). A Phosphothreonine modification is found at Thr-579. 589–592 (TKFD) provides a ligand contact to GTP.

It belongs to the GTP-binding SRP family. In terms of assembly, heterodimer with SRPRB. Interacts with the signal recognition particle (SRP) complex subunit SRP54.

It localises to the endoplasmic reticulum membrane. Functionally, component of the SRP (signal recognition particle) receptor. Ensures, in conjunction with the signal recognition particle, the correct targeting of the nascent secretory proteins to the endoplasmic reticulum membrane system. Forms a guanosine 5'-triphosphate (GTP)-dependent complex with the SRP subunit SRP54. SRP receptor compaction and GTPase rearrangement drive SRP-mediated cotranslational protein translocation into the ER. The polypeptide is Signal recognition particle receptor subunit alpha (Bos taurus (Bovine)).